Reading from the N-terminus, the 209-residue chain is Protein Nef (209 aa).

Gly-2 carries N-myristoyl glycine; by host lipidation. Ser-6 carries the phosphoserine; by host modification. Disordered stretches follow at residues 16-35 and 43-71; these read IRER…AVSQ and DKCG…EVGF. Over residues 47-61 the composition is skewed to low complexity; the sequence is AAASSSPAANNASCE. The interval 65–68 is acidic; interacts with host PACS1 and PACS2; stabilizes the interaction of NEF/MHC-I with host AP1M1; necessary for MHC-I internalization; sequence EEEE. The tract at residues 72–81 is SH3-binding; interaction with Src family tyrosine kinases; sequence PVRPQVPLRP. The PxxP; stabilizes the interaction of NEF/MHC-I with host AP1M1; necessary for MHC-I internalization signature appears at 75-78; that stretch reads PQVP. Residues 111–127 are mediates dimerization, Nef-PTE1 interaction; it reads EILDLWVYHTQGYFPDW. The interval 151–183 is binding to ATP6V1H; it reads MSPEEVEEANEGENNCLLHPISQHGMEDAEREV. The Dileucine internalization motif; necessary for CD4 internalization motif lies at 167–168; that stretch reads LL. Positions 177 to 178 match the Diacidic; necessary for CD4 internalization motif; it reads ED.

It belongs to the lentivirus primate group Nef protein family. As to quaternary structure, monomer; cytosolic form. Homodimer; membrane bound form. Interacts with Nef associated p21-activated kinase (PAK2); this interaction activates PAK2. Associates with the Nef-MHC-I-AP1 complex; this complex is required for MHC-I internalization. Interacts (via C-terminus) with host PI3-kinase. Interacts with host PACS1; this interaction seems to be weak. Interacts with host PACS2. Interacts with host LCK and MAPK3; these interactions inhibit the kinase activity of the latter. Interacts with host ATP6V1H; this interaction may play a role in CD4 endocytosis. Associates with the CD4-Nef-AP2 complex; this complex is required for CD4 internalization. Interacts with host AP2 subunit alpha and AP2 subunit sigma2. Interacts with TCR-zeta chain; this interaction up-regulates the Fas ligand (FasL) surface expression. Interacts with host HCK, LYN, and SRC; these interactions activate the Src family kinases. Interacts with MAP3K5; this interaction inhibits the Fas and TNFR-mediated death signals. Interacts with beta-COP and PTE1. Interacts with human RACK1; this increases Nef phosphorylation by PKC. Interacts with TP53; this interaction decreases the half-life of TP53, protecting the infected cell against p53-mediated apoptosis. The virion-associated Nef proteins are cleaved by the viral protease to release the soluble C-terminal core protein. Nef is probably cleaved concomitantly with viral structural proteins on maturation of virus particles. Post-translationally, myristoylated. In terms of processing, phosphorylated on serine residues, probably by host PKCdelta and theta.

The protein localises to the host cell membrane. The protein resides in the virion. It is found in the secreted. Its subcellular location is the host Golgi apparatus membrane. In terms of biological role, factor of infectivity and pathogenicity, required for optimal virus replication. Alters numerous pathways of T-lymphocyte function and down-regulates immunity surface molecules in order to evade host defense and increase viral infectivity. Alters the functionality of other immunity cells, like dendritic cells, monocytes/macrophages and NK cells. Functionally, in infected CD4(+) T-lymphocytes, down-regulates the surface MHC-I, mature MHC-II, CD4, CD28, CCR5 and CXCR4 molecules. Mediates internalization and degradation of host CD4 through the interaction of with the cytoplasmic tail of CD4, the recruitment of AP-2 (clathrin adapter protein complex 2), internalization through clathrin coated pits, and subsequent transport to endosomes and lysosomes for degradation. Diverts host MHC-I molecules to the trans-Golgi network-associated endosomal compartments by an endocytic pathway to finally target them for degradation. MHC-I down-regulation may involve AP-1 (clathrin adapter protein complex 1) or possibly Src family kinase-ZAP70/Syk-PI3K cascade recruited by PACS2. In consequence infected cells are masked for immune recognition by cytotoxic T-lymphocytes. Decreasing the number of immune receptors also prevents reinfection by more HIV particles (superinfection). Down-regulates host SERINC3 and SERINC5 thereby excluding these proteins from the viral particles. Virion infectivity is drastically higher when SERINC3 or SERINC5 are excluded from the viral envelope, because these host antiviral proteins impair the membrane fusion event necessary for subsequent virion penetration. Bypasses host T-cell signaling by inducing a transcriptional program nearly identical to that of anti-CD3 cell activation. Interaction with TCR-zeta chain up-regulates the Fas ligand (FasL). Increasing surface FasL molecules and decreasing surface MHC-I molecules on infected CD4(+) cells send attacking cytotoxic CD8+ T-lymphocytes into apoptosis. Its function is as follows. Plays a role in optimizing the host cell environment for viral replication without causing cell death by apoptosis. Protects the infected cells from apoptosis in order to keep them alive until the next virus generation is ready to strike. Inhibits the Fas and TNFR-mediated death signals by blocking MAP3K5/ASK1. Decreases the half-life of TP53, protecting the infected cell against p53-mediated apoptosis. Inhibits the apoptotic signals regulated by the Bcl-2 family proteins through the formation of a Nef/PI3-kinase/PAK2 complex that leads to activation of PAK2 and induces phosphorylation of host BAD. In terms of biological role, extracellular Nef protein targets CD4(+) T-lymphocytes for apoptosis by interacting with CXCR4 surface receptors. This chain is Protein Nef, found in Human immunodeficiency virus type 1 group M subtype A (isolate MAL) (HIV-1).